The sequence spans 146 residues: Hemoglobin subunit beta (146 aa).

The residue at position 1 (valine 1) is an N-acetylvaline. Residues 2-146 (NLTAAEKTQV…VANALAHKYH (145 aa)) form the Globin domain. Phosphothreonine is present on threonine 12. Lysine 59 carries the N6-acetyllysine modification. Position 63 (histidine 63) interacts with heme b. Residue lysine 82 is modified to N6-acetyllysine. Position 92 (histidine 92) interacts with heme b. S-nitrosocysteine is present on cysteine 93. N6-acetyllysine is present on lysine 144.

Belongs to the globin family. In terms of assembly, heterotetramer of two alpha chains and two beta chains. Red blood cells.

In terms of biological role, involved in oxygen transport from the lung to the various peripheral tissues. This Loxodonta africana (African elephant) protein is Hemoglobin subunit beta (HBB).